A 235-amino-acid chain; its full sequence is Glutathione S-transferase 1 (235 aa).

Residues 36-113 form the GST N-terminal domain; it reads EKYTLTYFNG…LLGGRFGLLG (78 aa). Glutathione contacts are provided by residues Tyr-42, Trp-73, Lys-77, Val-85, and 97 to 98; that span reads ES. The GST C-terminal domain maps to 115-235; sequence NDWEEAKIMA…WIKKRPKTYF (121 aa).

This sequence belongs to the GST superfamily. In terms of assembly, homodimer.

It carries out the reaction RX + glutathione = an S-substituted glutathione + a halide anion + H(+). In Onchocerca volvulus, this protein is Glutathione S-transferase 1 (GST1).